A 154-amino-acid chain; its full sequence is Deoxyuridine 5'-triphosphate nucleotidohydrolase (154 aa).

Substrate is bound by residues 72-74 (RSG), Asn85, 89-91 (LID), and Met99.

This sequence belongs to the dUTPase family. The cofactor is Mg(2+).

The enzyme catalyses dUTP + H2O = dUMP + diphosphate + H(+). It participates in pyrimidine metabolism; dUMP biosynthesis; dUMP from dCTP (dUTP route): step 2/2. Functionally, this enzyme is involved in nucleotide metabolism: it produces dUMP, the immediate precursor of thymidine nucleotides and it decreases the intracellular concentration of dUTP so that uracil cannot be incorporated into DNA. In Psychrobacter sp. (strain PRwf-1), this protein is Deoxyuridine 5'-triphosphate nucleotidohydrolase.